Reading from the N-terminus, the 241-residue chain is Lipopolysaccharide export system ATP-binding protein LptB (241 aa).

An ABC transporter domain is found at 4-237 (LTAKNLAKAY…EHVKRVYLGE (234 aa)). ATP is bound at residue 36 to 43 (GPNGAGKT).

It belongs to the ABC transporter superfamily. Outer membrane lipopolysaccharide export (TC 1.B.42) family. Component of the lipopolysaccharide transport and assembly complex. The LptBFG transporter is composed of two ATP-binding proteins (LptB) and two transmembrane proteins (LptF and LptG).

It is found in the cytoplasm. Its subcellular location is the cell inner membrane. Its function is as follows. Part of the ABC transporter complex LptBFG involved in the translocation of lipopolysaccharide (LPS) from the inner membrane to the outer membrane. Probably responsible for energy coupling to the transport system. This chain is Lipopolysaccharide export system ATP-binding protein LptB (lptB), found in Escherichia coli O157:H7.